An 894-amino-acid chain; its full sequence is Tyrosine-protein kinase receptor UFO (894 aa).

Residues 1-25 (MAWRCPRMGRVPLAWCLALCGWACM) form the signal peptide. The segment at 26 to 92 (APRGTQAEES…QTQVPLGEDE (67 aa)) is interaction with GAS6. Residues 26–451 (APRGTQAEES…STPAFSWPWW (426 aa)) lie on the Extracellular side of the membrane. Ig-like C2-type domains are found at residues 27–128 (PRGT…TFVS) and 139–222 (PYFL…ATIT). Residue Asn43 is glycosylated (N-linked (GlcNAc...) asparagine). Cys56 and Cys117 are oxidised to a cystine. Residues Asn157 and Asn198 are each glycosylated (N-linked (GlcNAc...) asparagine). Cys160 and Cys205 are disulfide-bonded. 2 consecutive Fibronectin type-III domains span residues 227-331 (QPRN…TPEG) and 336-428 (PPEN…AWRP). 3 N-linked (GlcNAc...) asparagine glycosylation sites follow: Asn339, Asn345, and Asn401. A helical membrane pass occupies residues 452 to 472 (YVLLGAVVAAACVLILALFLV). At 473-894 (HRRKKETRYG…PAAPGQEDGA (422 aa)) the chain is on the cytoplasmic side. In terms of domain architecture, Protein kinase spans 536–807 (VALGKTLGEG…ELREDLENTL (272 aa)). ATP contacts are provided by residues 542–550 (LGEGEFGAV) and Lys567. Residue Asp672 is the Proton acceptor of the active site. 3 positions are modified to phosphotyrosine; by autocatalysis: Tyr703, Tyr779, and Tyr821. Disordered regions lie at residues 823–853 (NMDE…DSCS) and 866–894 (YVLC…EDGA). Position 866 is a phosphotyrosine; by autocatalysis (Tyr866). Ser884 is subject to Phosphoserine.

This sequence belongs to the protein kinase superfamily. Tyr protein kinase family. AXL/UFO subfamily. In terms of assembly, heterodimer and heterotetramer with ligand GAS6. Interacts with CBL, GRB2, LCK, NCK2, PIK3R1, PIK3R2, PIK3R3, PLCG1, SOCS1 and TNS2. Part of a complex including AXL, TNK2 and GRB2, in which GRB2 promotes AXL recruitment by TNK2. Post-translationally, monoubiquitinated upon GAS6-binding. A very small proportion of the receptor could be subjected to polyubiquitination in a very transient fashion. Phosphorylated at tyrosine residues by autocatalysis, which activates kinase activity. As to expression, highly expressed in metastatic colon tumors. Expressed in primary colon tumors. Weakly expressed in normal colon tissue.

It localises to the cell membrane. The enzyme catalyses L-tyrosyl-[protein] + ATP = O-phospho-L-tyrosyl-[protein] + ADP + H(+). Activated by GAS6-binding and subsequent autophosphorylation. Its function is as follows. Receptor tyrosine kinase that transduces signals from the extracellular matrix into the cytoplasm by binding growth factor GAS6 and which is thus regulating many physiological processes including cell survival, cell proliferation, migration and differentiation. Ligand binding at the cell surface induces dimerization and autophosphorylation of AXL. Following activation by ligand, AXL binds and induces tyrosine phosphorylation of PI3-kinase subunits PIK3R1, PIK3R2 and PIK3R3; but also GRB2, PLCG1, LCK and PTPN11. Other downstream substrate candidates for AXL are CBL, NCK2, SOCS1 and TNS2. Recruitment of GRB2 and phosphatidylinositol 3 kinase regulatory subunits by AXL leads to the downstream activation of the AKT kinase. GAS6/AXL signaling plays a role in various processes such as endothelial cell survival during acidification by preventing apoptosis, optimal cytokine signaling during human natural killer cell development, hepatic regeneration, gonadotropin-releasing hormone neuron survival and migration, platelet activation, or regulation of thrombotic responses. Also plays an important role in inhibition of Toll-like receptors (TLRs)-mediated innate immune response. Functionally, (Microbial infection) Acts as a receptor for lassa virus and lymphocytic choriomeningitis virus, possibly through GAS6 binding to phosphatidyl-serine at the surface of virion envelope. In terms of biological role, (Microbial infection) Acts as a receptor for Ebolavirus, possibly through GAS6 binding to phosphatidyl-serine at the surface of virion envelope. (Microbial infection) Promotes Zika virus entry in glial cells, Sertoli cells and astrocytes. Additionally, Zika virus potentiates AXL kinase activity to antagonize type I interferon signaling and thereby promotes infection. Interferon signaling inhibition occurs via an SOCS1-dependent mechanism. The protein is Tyrosine-protein kinase receptor UFO (AXL) of Homo sapiens (Human).